We begin with the raw amino-acid sequence, 207 residues long: Small ribosomal subunit protein uS4 (207 aa).

The interval 31 to 54 is disordered; that stretch reads KCKLDTKPGQHGRTSGSRTSDYGN. A compositionally biased stretch (polar residues) spans 42-53; that stretch reads GRTSGSRTSDYG. The S4 RNA-binding domain occupies 97–158; that stretch reads SRLDNVVYRM…KAKKQARITE (62 aa).

Belongs to the universal ribosomal protein uS4 family. Part of the 30S ribosomal subunit. Contacts protein S5. The interaction surface between S4 and S5 is involved in control of translational fidelity.

In terms of biological role, one of the primary rRNA binding proteins, it binds directly to 16S rRNA where it nucleates assembly of the body of the 30S subunit. Its function is as follows. With S5 and S12 plays an important role in translational accuracy. In Polynucleobacter asymbioticus (strain DSM 18221 / CIP 109841 / QLW-P1DMWA-1) (Polynucleobacter necessarius subsp. asymbioticus), this protein is Small ribosomal subunit protein uS4.